Reading from the N-terminus, the 556-residue chain is Methyltransferase/ribosomally synthesized type II borosin cyclic peptide precursor pgiMA1 (556 aa).

The segment at 1-250 (MSSASSDSNT…SCSTLYVPPL (250 aa)) is methyltransferase domain. Residues Arg-74, Tyr-78, and Tyr-100 contribute to the active site. Positions 100, 102, 105, 174, 212, 243, and 244 each coordinate S-adenosyl-L-methionine. The interval 251-377 (THANKFSGNM…GAVFGVMKLR (127 aa)) is clasp domain. The precursor leader stretch occupies residues 378 to 386 (ASEVANEQG). N-methylaspartate occurs at positions 421, 434, 447, 460, 473, 486, 499, 512, 525, and 538. Positions 543-556 (AVPVPDHVAGIPCM) are excised as a propeptide.

This sequence in the N-terminal section; belongs to the precorrin methyltransferase family. Homodimer. PgiMA1 automethylates at Asp-421, Asp-434, Asp-447, Asp-460, Asp-473, Asp-486, Asp-499, Asp-512, Asp-525 and Asp-538 before being processed, probably by the M64 family peptidase found in the genes surrounding PgiMA1, to release methylated peptides which then undergos macrocyclization with the N-terminus of the modified core peptides. Peptide backbone alpha-N-methylations change the physicochemical properties of amide bonds to provide structural constraints and other favorable characteristics including biological membrane permeability to peptides.

The protein operates within secondary metabolite biosynthesis. Fusion protein of the methyltransferase pgiM1 and 12 type II borosin core peptides; part of the gene cluster that mediates the biosynthesis of a type II borosin, a highly methylated cyclic peptide with potent biological activities. Type II borosins derive from the C-terminus of the fusion protein, and it is the same protein that methylates its own C-terminus using S-adenosyl methionine (SAM). The C-terminus is subsequently cleaved off and macrocyclized by a prolyloligopeptidase to give the final product. This is Methyltransferase/ribosomally synthesized type II borosin cyclic peptide precursor pgiMA1 from Phlebiopsis gigantea (strain 11061_1 CR5-6) (White-rot fungus).